The primary structure comprises 185 residues: Ribosome-recycling factor (185 aa).

Belongs to the RRF family.

It localises to the cytoplasm. Functionally, responsible for the release of ribosomes from messenger RNA at the termination of protein biosynthesis. May increase the efficiency of translation by recycling ribosomes from one round of translation to another. This chain is Ribosome-recycling factor, found in Pseudomonas paraeruginosa (strain DSM 24068 / PA7) (Pseudomonas aeruginosa (strain PA7)).